Reading from the N-terminus, the 338-residue chain is Heat-inducible transcription repressor HrcA (338 aa).

It belongs to the HrcA family.

In terms of biological role, negative regulator of class I heat shock genes (grpE-dnaK-dnaJ and groELS operons). Prevents heat-shock induction of these operons. The sequence is that of Heat-inducible transcription repressor HrcA from Thermotoga maritima (strain ATCC 43589 / DSM 3109 / JCM 10099 / NBRC 100826 / MSB8).